We begin with the raw amino-acid sequence, 134 residues long: Large ribosomal subunit protein uL22 (134 aa).

This sequence belongs to the universal ribosomal protein uL22 family. In terms of assembly, part of the 50S ribosomal subunit.

In terms of biological role, this protein binds specifically to 23S rRNA; its binding is stimulated by other ribosomal proteins, e.g. L4, L17, and L20. It is important during the early stages of 50S assembly. It makes multiple contacts with different domains of the 23S rRNA in the assembled 50S subunit and ribosome. Its function is as follows. The globular domain of the protein is located near the polypeptide exit tunnel on the outside of the subunit, while an extended beta-hairpin is found that lines the wall of the exit tunnel in the center of the 70S ribosome. This Rhodococcus jostii (strain RHA1) protein is Large ribosomal subunit protein uL22.